The sequence spans 424 residues: UPF0229 protein PC1_1960 (424 aa).

Positions I46–E109 are disordered. The segment covering P77–R90 has biased composition (basic and acidic residues). Gly residues predominate over residues Q92–Q101.

It belongs to the UPF0229 family.

The sequence is that of UPF0229 protein PC1_1960 from Pectobacterium carotovorum subsp. carotovorum (strain PC1).